The following is a 91-amino-acid chain: Small ribosomal subunit protein bS18 (91 aa).

The protein belongs to the bacterial ribosomal protein bS18 family. Part of the 30S ribosomal subunit. Forms a tight heterodimer with protein bS6.

Functionally, binds as a heterodimer with protein bS6 to the central domain of the 16S rRNA, where it helps stabilize the platform of the 30S subunit. In Wolbachia sp. subsp. Brugia malayi (strain TRS), this protein is Small ribosomal subunit protein bS18.